Consider the following 70-residue polypeptide: Protein SlyX homolog (70 aa).

It belongs to the SlyX family.

The sequence is that of Protein SlyX homolog from Shewanella denitrificans (strain OS217 / ATCC BAA-1090 / DSM 15013).